Here is a 566-residue protein sequence, read N- to C-terminus: 2-isopropylmalate synthase (566 aa).

The Pyruvate carboxyltransferase domain occupies 32 to 306 (PLWCAVDLRD…DPQIDFSNID (275 aa)). The Mg(2+) site is built by Asp41, His245, His247, and Asn281. The tract at residues 451 to 566 (PVRPLERIKQ…VVSAINRASR (116 aa)) is regulatory domain.

It belongs to the alpha-IPM synthase/homocitrate synthase family. LeuA type 2 subfamily. In terms of assembly, homodimer. Mg(2+) is required as a cofactor.

The protein resides in the cytoplasm. It catalyses the reaction 3-methyl-2-oxobutanoate + acetyl-CoA + H2O = (2S)-2-isopropylmalate + CoA + H(+). The protein operates within amino-acid biosynthesis; L-leucine biosynthesis; L-leucine from 3-methyl-2-oxobutanoate: step 1/4. Catalyzes the condensation of the acetyl group of acetyl-CoA with 3-methyl-2-oxobutanoate (2-ketoisovalerate) to form 3-carboxy-3-hydroxy-4-methylpentanoate (2-isopropylmalate). This is 2-isopropylmalate synthase from Mycobacterium ulcerans (strain Agy99).